Reading from the N-terminus, the 474-residue chain is Alpha-galactosidase (474 aa).

The first 22 residues, 1–22 (MINFSLLTSIVLLASKVVGVSP), serve as a signal peptide directing secretion. Cystine bridges form between Cys43-Cys75 and Cys122-Cys152. Asn44 is a glycosylation site (N-linked (GlcNAc...) asparagine). Substrate is bound by residues Asp73, Asp74, and Lys148. The Nucleophile role is filled by Asp150. An N-linked (GlcNAc...) asparagine glycan is attached at Asn176. Arg206 contributes to the substrate binding site. Residue Asp210 is the Proton donor of the active site. 2 disulfide bridges follow: Cys222/Cys238 and Cys224/Cys231. Gln252 lines the substrate pocket. 5 N-linked (GlcNAc...) asparagine glycosylation sites follow: Asn271, Asn414, Asn423, Asn436, and Asn455.

Belongs to the glycosyl hydrolase 27 family. In terms of assembly, homotetramer.

The protein localises to the secreted. It catalyses the reaction Hydrolysis of terminal, non-reducing alpha-D-galactose residues in alpha-D-galactosides, including galactose oligosaccharides, galactomannans and galactolipids.. The protein is Alpha-galactosidase (MEL) of Torulaspora delbrueckii (Yeast).